Consider the following 344-residue polypeptide: MSRIVSGEAQPFEPADRALRPQTLSEFVGQEQAKANLSVFIDAARGRGEALDHVLLFGPPGLGKTTLAQILARELGVNFRATSGPVLAKAGDLAAILTNLEPRDVLFIDEIHRLAANVEEILYPAMEDHVLDLVIGEGPSARSVRIDLAPFTLVAATTRAGLLATPLRDRFGIPVRLEFYTHDELARVLLGAAAKMGAPLDPSGAREIAARARGTPRVAGRLLRRVRDFAAADGAEVIDRKAAAAALARLDVDEVGLDALDRRYLRALIENYAGGPAGVETLAYAIAEARDAVEDVIEPFLLQQGFIQRTPRGRMACAKAYEHLGLQAPRNLGGAAPPADLFDK.

The segment at 1–180 (MSRIVSGEAQ…FGIPVRLEFY (180 aa)) is large ATPase domain (RuvB-L). Residues Leu19, Arg20, Gly61, Lys64, Thr65, Thr66, Arg170, Tyr180, and Arg217 each coordinate ATP. Thr65 serves as a coordination point for Mg(2+). Positions 181–251 (THDELARVLL…AAAAALARLD (71 aa)) are small ATPAse domain (RuvB-S). The tract at residues 254-344 (EVGLDALDRR…AAPPADLFDK (91 aa)) is head domain (RuvB-H). DNA is bound by residues Arg290, Arg309, and Arg314.

It belongs to the RuvB family. As to quaternary structure, homohexamer. Forms an RuvA(8)-RuvB(12)-Holliday junction (HJ) complex. HJ DNA is sandwiched between 2 RuvA tetramers; dsDNA enters through RuvA and exits via RuvB. An RuvB hexamer assembles on each DNA strand where it exits the tetramer. Each RuvB hexamer is contacted by two RuvA subunits (via domain III) on 2 adjacent RuvB subunits; this complex drives branch migration. In the full resolvosome a probable DNA-RuvA(4)-RuvB(12)-RuvC(2) complex forms which resolves the HJ.

The protein resides in the cytoplasm. It carries out the reaction ATP + H2O = ADP + phosphate + H(+). In terms of biological role, the RuvA-RuvB-RuvC complex processes Holliday junction (HJ) DNA during genetic recombination and DNA repair, while the RuvA-RuvB complex plays an important role in the rescue of blocked DNA replication forks via replication fork reversal (RFR). RuvA specifically binds to HJ cruciform DNA, conferring on it an open structure. The RuvB hexamer acts as an ATP-dependent pump, pulling dsDNA into and through the RuvAB complex. RuvB forms 2 homohexamers on either side of HJ DNA bound by 1 or 2 RuvA tetramers; 4 subunits per hexamer contact DNA at a time. Coordinated motions by a converter formed by DNA-disengaged RuvB subunits stimulates ATP hydrolysis and nucleotide exchange. Immobilization of the converter enables RuvB to convert the ATP-contained energy into a lever motion, pulling 2 nucleotides of DNA out of the RuvA tetramer per ATP hydrolyzed, thus driving DNA branch migration. The RuvB motors rotate together with the DNA substrate, which together with the progressing nucleotide cycle form the mechanistic basis for DNA recombination by continuous HJ branch migration. Branch migration allows RuvC to scan DNA until it finds its consensus sequence, where it cleaves and resolves cruciform DNA. This chain is Holliday junction branch migration complex subunit RuvB, found in Phenylobacterium zucineum (strain HLK1).